A 208-amino-acid polypeptide reads, in one-letter code: Protein-L-isoaspartate O-methyltransferase (208 aa).

S59 is an active-site residue.

This sequence belongs to the methyltransferase superfamily. L-isoaspartyl/D-aspartyl protein methyltransferase family.

Its subcellular location is the cytoplasm. It catalyses the reaction [protein]-L-isoaspartate + S-adenosyl-L-methionine = [protein]-L-isoaspartate alpha-methyl ester + S-adenosyl-L-homocysteine. In terms of biological role, catalyzes the methyl esterification of L-isoaspartyl residues in peptides and proteins that result from spontaneous decomposition of normal L-aspartyl and L-asparaginyl residues. It plays a role in the repair and/or degradation of damaged proteins. In Aliivibrio fischeri (strain ATCC 700601 / ES114) (Vibrio fischeri), this protein is Protein-L-isoaspartate O-methyltransferase.